Reading from the N-terminus, the 265-residue chain is Undecaprenyl-diphosphatase (265 aa).

7 helical membrane-spanning segments follow: residues 38–58, 80–100, 107–127, 135–155, 178–198, 216–236, and 244–264; these read SDMFNIVIQAGAILAVTIIYW, LIVAFLITAILGLVVKKLGFE, PIAWALIIGGIWMIFAEWAAA, ITWLVAILVGIAQIVAGVFPG, TEFAFLVGIPTMYAASAYELL, IAFVVSTVVAFIAVKWLLAYI, and FAIYRIILGVLLLGMAATGLI.

The protein belongs to the UppP family.

The protein resides in the cell inner membrane. It catalyses the reaction di-trans,octa-cis-undecaprenyl diphosphate + H2O = di-trans,octa-cis-undecaprenyl phosphate + phosphate + H(+). Its function is as follows. Catalyzes the dephosphorylation of undecaprenyl diphosphate (UPP). Confers resistance to bacitracin. This is Undecaprenyl-diphosphatase from Rhizobium johnstonii (strain DSM 114642 / LMG 32736 / 3841) (Rhizobium leguminosarum bv. viciae).